The sequence spans 534 residues: Peptide chain release factor 3 (534 aa).

One can recognise a tr-type G domain in the interval 9–278; that stretch reads ARRRTFAIIS…FFIEHAPPPQ (270 aa). Residues 18-25, 86-90, and 140-143 contribute to the GTP site; these read SHPDAGKT, DTPGH, and NKLD.

The protein belongs to the TRAFAC class translation factor GTPase superfamily. Classic translation factor GTPase family. PrfC subfamily.

The protein localises to the cytoplasm. Increases the formation of ribosomal termination complexes and stimulates activities of RF-1 and RF-2. It binds guanine nucleotides and has strong preference for UGA stop codons. It may interact directly with the ribosome. The stimulation of RF-1 and RF-2 is significantly reduced by GTP and GDP, but not by GMP. This Xanthomonas oryzae pv. oryzae (strain PXO99A) protein is Peptide chain release factor 3.